A 132-amino-acid chain; its full sequence is Small ribosomal subunit protein uS9 (132 aa).

Residues 100–132 form a disordered region; sequence LKSNGLLTRDDRTKERKKPGLKRARKAPQYTKR. Residues 114 to 132 show a composition bias toward basic residues; sequence ERKKPGLKRARKAPQYTKR.

The protein belongs to the universal ribosomal protein uS9 family.

The protein is Small ribosomal subunit protein uS9 of Dehalococcoides mccartyi (strain ATCC BAA-2100 / JCM 16839 / KCTC 5957 / BAV1).